Reading from the N-terminus, the 101-residue chain is Protein Tat (101 aa).

Residues 1–24 (MEPVDPNREPWNHPGSQPKTACTN) are interaction with human CREBBP. The segment at 1–48 (MEPVDPNREPWNHPGSQPKTACTNCYCKKCCYHCQVCFLQKGLGISYG) is transactivation. Zn(2+) contacts are provided by cysteine 22, cysteine 25, and cysteine 27. Residues 22-37 (CTNCYCKKCCYHCQVC) form a cysteine-rich region. Lysine 28 bears the N6-acetyllysine; by host PCAF mark. Zn(2+)-binding residues include cysteine 30, histidine 33, cysteine 34, and cysteine 37. A core region spans residues 38-48 (FLQKGLGISYG). Residues 48–101 (GRKKRRQRRSAPPGSKTHQDLIPKQPLSQTQRKPTGPEESKKEVESKAEPDRFD) form a disordered region. Residues 49 to 57 (RKKRRQRRS) carry the Nuclear localization signal, RNA-binding (TAR), and protein transduction motif. Positions 49–86 (RKKRRQRRSAPPGSKTHQDLIPKQPLSQTQRKPTGPEE) are interaction with the host capping enzyme RNGTT. 2 positions are modified to N6-acetyllysine; by host EP300 and GCN5L2: lysine 50 and lysine 51. Arginine 52 and arginine 53 each carry asymmetric dimethylarginine; by host PRMT6. Lysine 71 participates in a covalent cross-link: Glycyl lysine isopeptide (Lys-Gly) (interchain with G-Cter in ubiquitin). A compositionally biased stretch (basic and acidic residues) spans 82 to 101 (TGPEESKKEVESKAEPDRFD).

This sequence belongs to the lentiviruses Tat family. In terms of assembly, interacts with host CCNT1. Associates with the P-TEFb complex composed at least of Tat, P-TEFb (CDK9 and CCNT1), TAR RNA, RNA Pol II. Recruits the HATs CREBBP, TAF1/TFIID, EP300, PCAF and GCN5L2. Interacts with host KAT5/Tip60; this interaction targets the latter to degradation. Interacts with the host deacetylase SIRT1. Interacts with host capping enzyme RNGTT; this interaction stimulates RNGTT. Binds to host KDR, and to the host integrins ITGAV/ITGB3 and ITGA5/ITGB1. Interacts with host KPNB1/importin beta-1 without previous binding to KPNA1/importin alpha-1. Interacts with EIF2AK2. Interacts with host nucleosome assembly protein NAP1L1; this interaction may be required for the transport of Tat within the nucleus, since the two proteins interact at the nuclear rim. Interacts with host C1QBP/SF2P32; this interaction involves lysine-acetylated Tat. Interacts with the host chemokine receptors CCR2, CCR3 and CXCR4. Interacts with host DPP4/CD26; this interaction may trigger an anti-proliferative effect. Interacts with host LDLR. Interacts with the host extracellular matrix metalloproteinase MMP1. Interacts with host PRMT6; this interaction mediates Tat's methylation. Interacts with, and is ubiquitinated by MDM2/Hdm2. Interacts with host PSMC3 and HTATIP2. Interacts with STAB1; this interaction may overcome SATB1-mediated repression of IL2 and IL2RA (interleukin) in T cells by binding to the same domain than HDAC1. Interacts (when acetylated) with human CDK13, thereby increasing HIV-1 mRNA splicing and promoting the production of the doubly spliced HIV-1 protein Nef. Interacts with host TBP; this interaction modulates the activity of transcriptional pre-initiation complex. Interacts with host RELA. Interacts with host PLSCR1; this interaction negatively regulates Tat transactivation activity by altering its subcellular distribution. In terms of processing, asymmetrical arginine methylation by host PRMT6 seems to diminish the transactivation capacity of Tat and affects the interaction with host CCNT1. Acetylation by EP300, CREBBP, GCN5L2/GCN5 and PCAF regulates the transactivation activity of Tat. EP300-mediated acetylation of Lys-50 promotes dissociation of Tat from the TAR RNA through the competitive binding to PCAF's bromodomain. In addition, the non-acetylated Tat's N-terminus can also interact with PCAF. PCAF-mediated acetylation of Lys-28 enhances Tat's binding to CCNT1. Lys-50 is deacetylated by SIRT1. Post-translationally, polyubiquitination by host MDM2 does not target Tat to degradation, but activates its transactivation function and fosters interaction with CCNT1 and TAR RNA. In terms of processing, phosphorylated by EIF2AK2 on serine and threonine residues adjacent to the basic region important for TAR RNA binding and function. Phosphorylation of Tat by EIF2AK2 is dependent on the prior activation of EIF2AK2 by dsRNA.

The protein resides in the host nucleus. It localises to the host nucleolus. The protein localises to the host cytoplasm. It is found in the secreted. Functionally, transcriptional activator that increases RNA Pol II processivity, thereby increasing the level of full-length viral transcripts. Recognizes a hairpin structure at the 5'-LTR of the nascent viral mRNAs referred to as the transactivation responsive RNA element (TAR) and recruits the cyclin T1-CDK9 complex (P-TEFb complex) that will in turn hyperphosphorylate the RNA polymerase II to allow efficient elongation. The CDK9 component of P-TEFb and other Tat-activated kinases hyperphosphorylate the C-terminus of RNA Pol II that becomes stabilized and much more processive. Other factors such as HTATSF1/Tat-SF1, SUPT5H/SPT5, and HTATIP2 are also important for Tat's function. Besides its effect on RNA Pol II processivity, Tat induces chromatin remodeling of proviral genes by recruiting the histone acetyltransferases (HATs) CREBBP, EP300 and PCAF to the chromatin. This also contributes to the increase in proviral transcription rate, especially when the provirus integrates in transcriptionally silent region of the host genome. To ensure maximal activation of the LTR, Tat mediates nuclear translocation of NF-kappa-B by interacting with host RELA. Through its interaction with host TBP, Tat may also modulate transcription initiation. Tat can reactivate a latently infected cell by penetrating in it and transactivating its LTR promoter. In the cytoplasm, Tat is thought to act as a translational activator of HIV-1 mRNAs. Extracellular circulating Tat can be endocytosed by surrounding uninfected cells via the binding to several surface receptors such as CD26, CXCR4, heparan sulfate proteoglycans (HSPG) or LDLR. Neurons are rarely infected, but they internalize Tat via their LDLR. Through its interaction with nuclear HATs, Tat is potentially able to control the acetylation-dependent cellular gene expression. Modulates the expression of many cellular genes involved in cell survival, proliferation or in coding for cytokines or cytokine receptors. Tat plays a role in T-cell and neurons apoptosis. Tat induced neurotoxicity and apoptosis probably contribute to neuroAIDS. Circulating Tat also acts as a chemokine-like and/or growth factor-like molecule that binds to specific receptors on the surface of the cells, affecting many cellular pathways. In the vascular system, Tat binds to ITGAV/ITGB3 and ITGA5/ITGB1 integrins dimers at the surface of endothelial cells and competes with bFGF for heparin-binding sites, leading to an excess of soluble bFGF. This chain is Protein Tat, found in Homo sapiens (Human).